Consider the following 438-residue polypeptide: Putative formin-like protein 21a (438 aa).

The disordered stretch occupies residues 1-74 (MSPVEISGAD…RVLPRPPPPP (74 aa)). Residues 22–61 (PLPPPPPPPPPPMRRRAPLPPPPPPPMRRRAPLPPPPPPA) are compositionally biased toward pro residues. One can recognise an FH2 domain in the interval 124-438 (FPCPSKKKSS…SYGYFDQPWI (315 aa)).

Belongs to the formin-like family. Class-II subfamily.

The sequence is that of Putative formin-like protein 21a (FH21A) from Arabidopsis thaliana (Mouse-ear cress).